A 208-amino-acid chain; its full sequence is Glycerol-3-phosphate acyltransferase (208 aa).

Transmembrane regions (helical) follow at residues 4 to 24 (LALS…AVLI), 56 to 76 (VAVL…GYFL), 80 to 100 (PFML…PIFF), 117 to 137 (PIGL…VVLF), and 139 to 159 (YSSL…WLIK).

The protein belongs to the PlsY family. As to quaternary structure, probably interacts with PlsX.

The protein localises to the cell inner membrane. It carries out the reaction an acyl phosphate + sn-glycerol 3-phosphate = a 1-acyl-sn-glycero-3-phosphate + phosphate. Its pathway is lipid metabolism; phospholipid metabolism. Functionally, catalyzes the transfer of an acyl group from acyl-phosphate (acyl-PO(4)) to glycerol-3-phosphate (G3P) to form lysophosphatidic acid (LPA). This enzyme utilizes acyl-phosphate as fatty acyl donor, but not acyl-CoA or acyl-ACP. The sequence is that of Glycerol-3-phosphate acyltransferase from Vibrio cholerae serotype O1 (strain ATCC 39541 / Classical Ogawa 395 / O395).